The following is a 344-amino-acid chain: GPALPP motifs-containing protein 1 (344 aa).

The tract at residues 1–309 (MARDLIGPAL…QERIPFDRDK (309 aa)) is disordered. An N-acetylalanine modification is found at A2. Positions 7 to 12 (GPALPP) match the GPALPP motif 1 motif. S28 is modified (phosphoserine). The GPALPP motif 2 signature appears at 30–35 (GPALPP). Acidic residues-rich tracts occupy residues 58–67 (GNQESEEDDT) and 80–93 (DDND…DDDG). A GPALPP motif 3 motif is present at residues 96–101 (GPALPP). Phosphoserine is present on S109. The span at 111–120 (PRPIIGPALP) shows a compositional bias: pro residues. The GPALPP motif 4 signature appears at 116 to 121 (GPALPP). Positions 128-137 (QKSDKGRDDP) are enriched in basic and acidic residues. Residue T142 is modified to Phosphothreonine. Residues S144 and S145 each carry the phosphoserine modification. Composition is skewed to basic and acidic residues over residues 167-191 (EFEK…KPIV), 231-265 (PADR…KRLA), 273-283 (ESKRSESLMDI), and 291-309 (KAAE…DRDK). K275 is covalently cross-linked (Glycyl lysine isopeptide (Lys-Gly) (interchain with G-Cter in SUMO2)). A Glycyl lysine isopeptide (Lys-Gly) (interchain with G-Cter in SUMO2) cross-link involves residue K312.

This chain is GPALPP motifs-containing protein 1 (GPALPP1), found in Pongo abelii (Sumatran orangutan).